A 586-amino-acid chain; its full sequence is Aspartate--tRNA(Asp/Asn) ligase (586 aa).

An L-aspartate-binding site is contributed by glutamate 176. An aspartate region spans residues 200–203 (QIFK). An L-aspartate-binding site is contributed by arginine 222. ATP-binding positions include 222–224 (RDE) and glutamine 231. An L-aspartate-binding site is contributed by histidine 449. ATP is bound at residue glutamate 483. Arginine 490 contributes to the L-aspartate binding site. 535 to 538 (GIDR) serves as a coordination point for ATP.

The protein belongs to the class-II aminoacyl-tRNA synthetase family. Type 1 subfamily. As to quaternary structure, homodimer.

It is found in the cytoplasm. It catalyses the reaction tRNA(Asx) + L-aspartate + ATP = L-aspartyl-tRNA(Asx) + AMP + diphosphate. In terms of biological role, aspartyl-tRNA synthetase with relaxed tRNA specificity since it is able to aspartylate not only its cognate tRNA(Asp) but also tRNA(Asn). Reaction proceeds in two steps: L-aspartate is first activated by ATP to form Asp-AMP and then transferred to the acceptor end of tRNA(Asp/Asn). This Brachyspira hyodysenteriae (strain ATCC 49526 / WA1) protein is Aspartate--tRNA(Asp/Asn) ligase.